A 334-amino-acid polypeptide reads, in one-letter code: Malate dehydrogenase, cytoplasmic (334 aa).

An N-acetylserine modification is found at serine 2. NAD(+) contacts are provided by residues 11–17 (GAAGQIA) and aspartate 42. Substrate is bound by residues arginine 92 and arginine 98. Asparagine 105 serves as a coordination point for NAD(+). Residue lysine 110 is modified to N6-succinyllysine. Residue glutamine 112 participates in NAD(+) binding. 2 positions are modified to N6-acetyllysine: lysine 118 and lysine 121. Residue 129-131 (VGN) coordinates NAD(+). Residues asparagine 131 and arginine 162 each contribute to the substrate site. Histidine 187 (proton acceptor) is an active-site residue. At lysine 214 the chain carries N6-succinyllysine. A Phosphoserine modification is found at serine 217. At arginine 230 the chain carries Omega-N-methylarginine. At serine 241 the chain carries Phosphoserine. Lysine 298 bears the N6-acetyllysine; alternate mark. N6-succinyllysine; alternate is present on lysine 298. Serine 309 bears the Phosphoserine mark. Lysine 318 carries the post-translational modification N6-succinyllysine. 2 positions are modified to phosphoserine: serine 332 and serine 333.

The protein belongs to the LDH/MDH superfamily. MDH type 2 family. In terms of assembly, homodimer. ISGylated. In terms of processing, acetylation at Lys-118 dramatically enhances enzymatic activity and promotes adipogenic differentiation.

The protein resides in the cytoplasm. The protein localises to the cytosol. It carries out the reaction (S)-malate + NAD(+) = oxaloacetate + NADH + H(+). The catalysed reaction is (2R)-2-hydroxy-3-(4-hydroxyphenyl)propanoate + NAD(+) = 3-(4-hydroxyphenyl)pyruvate + NADH + H(+). The enzyme catalyses (S)-2-hydroxyglutarate + NAD(+) = 2-oxoglutarate + NADH + H(+). Functionally, catalyzes the reduction of aromatic alpha-keto acids in the presence of NADH. Plays essential roles in the malate-aspartate shuttle and the tricarboxylic acid cycle, important in mitochondrial NADH supply for oxidative phosphorylation. Catalyzes the reduction of 2-oxoglutarate to 2-hydroxyglutarate, leading to elevated reactive oxygen species (ROS). The protein is Malate dehydrogenase, cytoplasmic (Mdh1) of Rattus norvegicus (Rat).